The following is a 212-amino-acid chain: Transcription antitermination protein NusB (212 aa).

Disordered stretches follow at residues methionine 1–asparagine 34 and glutamate 169–glycine 212. Positions alanine 178–glycine 212 are enriched in low complexity.

This sequence belongs to the NusB family.

Involved in transcription antitermination. Required for transcription of ribosomal RNA (rRNA) genes. Binds specifically to the boxA antiterminator sequence of the ribosomal RNA (rrn) operons. The protein is Transcription antitermination protein NusB of Delftia acidovorans (strain DSM 14801 / SPH-1).